The following is a 1222-amino-acid chain: MSDPLKMAAETEEIKPVPAAMGEKKDVVLCKKIVETLGGGGDQRVLLVGEAGIGKTRMAQMVDKEASKDVLCYQTLWLHLNRKFKVNDNYIKEKKFEDEWSLYENIASQLSLYSDFEETEVGERDEDEEEEKKVEDLLKDLKPKIEKYLLEKKEAVVKKLEDDKKKKEKEAAEKLEAEKKLVDPAAKKAKDHGNKNPTDAAKEKTTQVVAGGEDKAQTSSERKPYLLLILDDEGMTSEYEVMVHLGLEDFLKDHTPRKILITRRQETEEATKSGEHAEGEANDSQSGEKKEDTDGEDEIRSADKEEPESQARVKTEEKHEKVVPPTIDDLWGSTNTYGEITFQTTNESQDLLESFNLKEAEALFTSSMFFKDMPNFFFDPVPGTDEKLLNHMLKKSKSLPAAINVLAKSLEYTVKSKSYKLNKDEEERLLKEKIEMVLSAERGNPSDQESSSESPKKASGENPILLLAYKLFKTDGPLKDTILDCFWHSLDFFEHCGCVYYRDLITQWILEGYFDPVRSVEKAYQDGHSIFMELIDRGMLKIQENNVVVPEMAMRNVIDPRRGGHLGKSRLGFSRVYGGNKRKGIGKITQLDDMIKTVQAKKGDKITTILVSGDRLRRVTPKKFFKNLKELEVLGLFEPTVKPFVPSFSDQLKLLRVLIIRDCDLLKSIEELKALTKLNTLEVSGASSLSKISEKFFESFPELRSLHLSGLKIESSPPSISGLKELHCLIIKDCPLLQDLPNIQELVNLEVVDVSGASGLRTCFDNADGAKKNKSKNKNFYLLTKLQHLDFSGSQIERLPIFQDSAVAAKLHSLTRLLLRNCSKLRRLPSLKPLSGLQILDLSGTTSLVEMLEVCFEDKLELKTLNLSGTNLSELATTIEDLSSLNELLLRDCINLDAIPNIEKLENLEVIDVSGSAKLAKIEGSFEKMFYLRVVDLSGTQVETPELPADTKIHCLKRFTRADGKCFERDTWREIKEDIERDRSENASSSDAVVISQEITEKKPVEIREVESNAPRASDCTEKVDVNKERLLKVPIDRALYQKALTSLVDSKIPQEEVLEINETNKLDEEALASAEFVSFVDCTPERVKSIFEKAKLVKGCWLRMCFDIKDPFDGVDEENLKSLETLSITNLLSLETISFIAKLENLKNLSLDCCPKIKTIFPEMPASLPVLNLKHCENLEKVVVGVEVSTHTNLDLKVENCPKFGDYVMVDHSDVPPPHEC.

49–56 contacts ATP; sequence GEAGIGKT. A coiled-coil region spans residues 122-183; it reads GERDEDEEEE…KLEAEKKLVD (62 aa). Composition is skewed to basic and acidic residues over residues 171–205, 212–224, 263–279, and 286–322; these read AAEKLEAEKKLVDPAAKKAKDHGNKNPTDAAKEKT, GEDKAQTSSERKP, RRQETEEATKSGEHAEG, and SGEKKEDTDGEDEIRSADKEEPESQARVKTEEKHEKV. Disordered regions lie at residues 171-225 and 263-327; these read AAEK…RKPY and RRQE…PPTI. Phosphothreonine is present on Thr293. 11 LRR repeats span residues 654–676, 677–699, 702–724, 725–747, 785–806, 813–835, 836–856, 861–883, 884–906, 907–929, and 931–951; these read LLRVLIIRDCDLLKSIEELKALT, KLNTLEVSGASSLSKISEKFFES, ELRSLHLSGLKIESSPPSISGLK, ELHCLIIKDCPLLQDLPNIQELV, KLQHLDFSGSQIERLPIFQDSA, SLTRLLLRNCSKLRRLPSLKPLS, GLQILDLSGTTSLVEMLEVCF, ELKTLNLSGTNLSELATTIEDLS, SLNELLLRDCINLDAIPNIEKLE, NLEVIDVSGSAKLAKIEGSFEKM, and YLRVVDLSGTQVETPELPADT.

Belongs to the disease resistance NB-LRR family.

Its function is as follows. Probable disease resistance protein. The chain is Probable disease resistance protein At5g45510 from Arabidopsis thaliana (Mouse-ear cress).